Consider the following 74-residue polypeptide: Cell division protein ZapB (74 aa).

A coiled-coil region spans residues 2-74 (TLDLLEQLES…LVGKIEETES (73 aa)).

The protein belongs to the ZapB family. As to quaternary structure, homodimer. The ends of the coiled-coil dimer bind to each other, forming polymers. Interacts with FtsZ.

It localises to the cytoplasm. In terms of biological role, non-essential, abundant cell division factor that is required for proper Z-ring formation. It is recruited early to the divisome by direct interaction with FtsZ, stimulating Z-ring assembly and thereby promoting cell division earlier in the cell cycle. Its recruitment to the Z-ring requires functional FtsA or ZipA. The chain is Cell division protein ZapB from Psychromonas ingrahamii (strain DSM 17664 / CCUG 51855 / 37).